A 316-amino-acid chain; its full sequence is Olfactory receptor 51J1 (316 aa).

The Extracellular segment spans residues 1–31; sequence MKISNNSLGFLPTTFILVGIPGLESEHLWIS. Asparagine 5 is a glycosylation site (N-linked (GlcNAc...) asparagine). Residues 32 to 52 traverse the membrane as a helical segment; sequence VPFSLIYIIIFLGNGIILHVI. At 53–63 the chain is on the cytoplasmic side; sequence RTDIALHQPMY. Residues 64 to 84 traverse the membrane as a helical segment; sequence LFLAMLALAEVRVSASTLPTV. The Extracellular segment spans residues 85 to 104; it reads LGIFLFGNTEISLEACLFPD. Cysteine 100 and cysteine 191 are joined by a disulfide. The helical transmembrane segment at 105–125 threads the bilayer; sequence VLHPFFIHDGASCAAGHVFGP. The Cytoplasmic segment spans residues 126–161; the sequence is LYSHLQPTELHSYPDTAQGLWHRSYYRTEKHYAHGS. A helical transmembrane segment spans residues 162-182; sequence VAHSLMASALLWPQCPLTFLL. The Extracellular portion of the chain corresponds to 183–191; it reads SAPQSYLSC. A helical transmembrane segment spans residues 192-212; it reads GNISVNNIYGIFIVTSTFGLD. Topologically, residues 213 to 242 are cytoplasmic; it reads SLLIVISYGLILHTVLGIATGEGRKKALNT. A helical transmembrane segment spans residues 243-263; it reads CGSHVCAVLAYYVPMIGLSIV. Residues 264–275 lie on the Extracellular side of the membrane; it reads HRLGHRVSPLLQ. Residues 276-296 traverse the membrane as a helical segment; sequence AMMANAYLFFPPVVNPIVYSI. The Cytoplasmic portion of the chain corresponds to 297 to 316; the sequence is KTKEIHGAIVRMLLEKRRRV.

Belongs to the G-protein coupled receptor 1 family.

It localises to the cell membrane. Its function is as follows. Odorant receptor. The chain is Olfactory receptor 51J1 (OR51J1) from Homo sapiens (Human).